A 635-amino-acid polypeptide reads, in one-letter code: Threonine--tRNA ligase (635 aa).

Positions 1–61 constitute a TGS domain; it reads MIKITLKDGK…HKDSSLEILT (61 aa). Positions 242 to 532 are catalytic; sequence DHRKLGKELD…LIEQYAGAFP (291 aa). Residues Cys333, His384, and His509 each coordinate Zn(2+).

Belongs to the class-II aminoacyl-tRNA synthetase family. As to quaternary structure, homodimer. It depends on Zn(2+) as a cofactor.

The protein resides in the cytoplasm. The enzyme catalyses tRNA(Thr) + L-threonine + ATP = L-threonyl-tRNA(Thr) + AMP + diphosphate + H(+). Its function is as follows. Catalyzes the attachment of threonine to tRNA(Thr) in a two-step reaction: L-threonine is first activated by ATP to form Thr-AMP and then transferred to the acceptor end of tRNA(Thr). Also edits incorrectly charged L-seryl-tRNA(Thr). The chain is Threonine--tRNA ligase from Clostridium botulinum (strain 657 / Type Ba4).